Reading from the N-terminus, the 469-residue chain is Ribulose bisphosphate carboxylase large chain (469 aa).

Lys-8 carries the post-translational modification N6,N6,N6-trimethyllysine. Substrate is bound by residues Asn-117 and Thr-167. Lys-169 functions as the Proton acceptor in the catalytic mechanism. Lys-171 is a binding site for substrate. Lys-195, Asp-197, and Glu-198 together coordinate Mg(2+). Lys-195 is subject to N6-carboxylysine. His-288 serves as the catalytic Proton acceptor. Substrate contacts are provided by Arg-289, His-321, and Ser-373.

It belongs to the RuBisCO large chain family. Type I subfamily. In terms of assembly, heterohexadecamer of 8 large chains and 8 small chains; disulfide-linked. The disulfide link is formed within the large subunit homodimers. Mg(2+) is required as a cofactor. Post-translationally, the disulfide bond which can form in the large chain dimeric partners within the hexadecamer appears to be associated with oxidative stress and protein turnover.

Its subcellular location is the plastid. It is found in the chloroplast. The enzyme catalyses 2 (2R)-3-phosphoglycerate + 2 H(+) = D-ribulose 1,5-bisphosphate + CO2 + H2O. It catalyses the reaction D-ribulose 1,5-bisphosphate + O2 = 2-phosphoglycolate + (2R)-3-phosphoglycerate + 2 H(+). RuBisCO catalyzes two reactions: the carboxylation of D-ribulose 1,5-bisphosphate, the primary event in carbon dioxide fixation, as well as the oxidative fragmentation of the pentose substrate in the photorespiration process. Both reactions occur simultaneously and in competition at the same active site. The chain is Ribulose bisphosphate carboxylase large chain from Persicaria senticosa (Knotweed).